We begin with the raw amino-acid sequence, 107 residues long: UPF0235 protein RPC_0058 (107 aa).

Belongs to the UPF0235 family.

The polypeptide is UPF0235 protein RPC_0058 (Rhodopseudomonas palustris (strain BisB18)).